Here is a 977-residue protein sequence, read N- to C-terminus: Alanine--tRNA ligase (977 aa).

The segment at 512–535 is disordered; sequence SQVDSKLQSSTPAGTGSYDSKQVS. Positions 618, 622, 720, and 724 each coordinate Zn(2+).

It belongs to the class-II aminoacyl-tRNA synthetase family. The cofactor is Zn(2+).

The protein resides in the cytoplasm. The catalysed reaction is tRNA(Ala) + L-alanine + ATP = L-alanyl-tRNA(Ala) + AMP + diphosphate. Functionally, catalyzes the attachment of alanine to tRNA(Ala) in a two-step reaction: alanine is first activated by ATP to form Ala-AMP and then transferred to the acceptor end of tRNA(Ala). Also edits incorrectly charged Ser-tRNA(Ala) and Gly-tRNA(Ala) via its editing domain. The protein is Alanine--tRNA ligase of Leptospira interrogans serogroup Icterohaemorrhagiae serovar Lai (strain 56601).